The following is a 455-amino-acid chain: Ornithine decarboxylase (455 aa).

Lysine 67 is modified (N6-(pyridoxal phosphate)lysine). Pyridoxal 5'-phosphate-binding positions include serine 197, glycine 234, and 271-274 (EPGR). Serine 297 is subject to Phosphoserine; by CK2. 325–326 (YD) contacts substrate. Residue cysteine 354 is the Proton donor; shared with dimeric partner of the active site. S-nitrosocysteine is present on cysteine 354. Aspartate 355 lines the substrate pocket. Tyrosine 383 contributes to the pyridoxal 5'-phosphate binding site.

Belongs to the Orn/Lys/Arg decarboxylase class-II family. In terms of assembly, homodimer. Only the dimer is catalytically active, as the active sites are constructed of residues from both monomers. The cofactor is pyridoxal 5'-phosphate.

It carries out the reaction L-ornithine + H(+) = putrescine + CO2. Its pathway is amine and polyamine biosynthesis; putrescine biosynthesis via L-ornithine pathway; putrescine from L-ornithine: step 1/1. Inhibited by antizymes (AZs) OAZ1, OAZ2 and OAZ3 in response to polyamine levels. AZs inhibit the assembly of the functional homodimer by binding to ODC monomers. Additionally, OAZ1 targets ODC monomers for ubiquitin-independent proteolytic destruction by the 26S proteasome. Catalyzes the first and rate-limiting step of polyamine biosynthesis that converts ornithine into putrescine, which is the precursor for the polyamines, spermidine and spermine. Polyamines are essential for cell proliferation and are implicated in cellular processes, ranging from DNA replication to apoptosis. This chain is Ornithine decarboxylase (ODC1), found in Cricetulus griseus (Chinese hamster).